The following is a 447-amino-acid chain: Cellulosome-anchoring protein (447 aa).

The first 29 residues, 1 to 29 (MKRIKRILAVLTIFALLATINAFTFVSLA), serve as a signal peptide directing secretion. Positions 30–180 (QTNTIEIIIG…EIIEASAPEA (151 aa)) constitute a Cohesin domain. The receptor binding site for duplicated segment of CipA stretch occupies residues 30–180 (QTNTIEIIIG…EIIEASAPEA (151 aa)). The segment at 177-247 (APEATPTPGS…EHAPFLKGYP (71 aa)) is disordered. A compositionally biased stretch (gly residues) spans 188–200 (AGSGAGGGTGSSG). The segment covering 201–223 (SGQPSATPTPTATEKPSTTPKTT) has biased composition (low complexity). SLH domains follow at residues 216-280 (PSTT…AGKN), 281-344 (SSIT…EQGT), and 345-408 (DVKT…GAVL). The region spanning 409-429 (EFTDVPVNYWAYKDIAEGVIY) is the SLH 4; truncated domain.

It is found in the secreted. The protein resides in the cell wall. It localises to the S-layer. In terms of biological role, anchors the cellulosome to the cell surface by binding the duplicated segment that is present at the C-terminal end of CipA. The sequence is that of Cellulosome-anchoring protein (ancA) from Acetivibrio thermocellus (strain ATCC 27405 / DSM 1237 / JCM 9322 / NBRC 103400 / NCIMB 10682 / NRRL B-4536 / VPI 7372) (Clostridium thermocellum).